The following is a 151-amino-acid chain: Probable cyclic pyranopterin monophosphate synthase (151 aa).

Residues 66–68 (MCH) and 102–103 (ME) contribute to the substrate site. D117 is an active-site residue.

Belongs to the MoaC family. As to quaternary structure, homohexamer; trimer of dimers.

The enzyme catalyses (8S)-3',8-cyclo-7,8-dihydroguanosine 5'-triphosphate = cyclic pyranopterin phosphate + diphosphate. Its pathway is cofactor biosynthesis; molybdopterin biosynthesis. Functionally, catalyzes the conversion of (8S)-3',8-cyclo-7,8-dihydroguanosine 5'-triphosphate to cyclic pyranopterin monophosphate (cPMP). The protein is Probable cyclic pyranopterin monophosphate synthase of Sulfurisphaera tokodaii (strain DSM 16993 / JCM 10545 / NBRC 100140 / 7) (Sulfolobus tokodaii).